A 965-amino-acid polypeptide reads, in one-letter code: Transmembrane channel-like protein 5 (965 aa).

Composition is skewed to polar residues over residues 1–10 (MSSFHKNSSY) and 20–31 (SGSQNHTQNYLR). Residues 1 to 235 (MSSFHKNSSY…GAEEGDVYSP (235 aa)) form a disordered region. Over 1–417 (MSSFHKNSSY…YFSFLRWLLK (417 aa)) the chain is Extracellular. Over residues 61 to 70 (TNPDYHHSLA) the composition is skewed to basic and acidic residues. Polar residues predominate over residues 166-181 (QGNSYHSGPRSHSNLP). At S248 the chain carries Phosphoserine. A helical membrane pass occupies residues 418 to 438 (FNIFSFVMNFSFIIIPQFTVG). At 439–444 (EKNTLQ) the chain is on the cytoplasmic side. Residues 445–467 (FTGLEFFTGAGYFRETVMYYGFY) traverse the membrane as a helical segment. Residues 468-484 (TNSTIRHRMGGASYNMQ) are Extracellular-facing. Residues 485 to 505 (LAYIFTIGACLVICFFSLLFS) traverse the membrane as a helical segment. Over 506–578 (MAKYFRNNFI…NQKLTRFSVH (73 aa)) the chain is Cytoplasmic. Residues 579-599 (VAAWLVSTGITAACCVAVYYL) form a helical membrane-spanning segment. Residues 600–613 (AEYNSEFLKTHKNP) lie on the Extracellular side of the membrane. The chain crosses the membrane as a helical span at residues 614–634 (GAVLLLPFVVSCINLAVPRFY). The Cytoplasmic segment spans residues 635 to 657 (SMFRLVERYEIPRQEVYVLLIRN). A helical transmembrane segment spans residues 658-678 (IFLKISIVGILCYYWLNIVAL). Over 679–691 (SGEECWETLIGQD) the chain is Extracellular. The chain crosses the membrane as a helical span at residues 692-712 (IYRLLLMDFVFSLADSLLGEF). Over 713 to 747 (LRRLIGMKFITSLSLQEFDIARNVLELIYAQTLAW) the chain is Cytoplasmic. The chain crosses the membrane as a helical span at residues 748–768 (LGIFFCPLLPFIQMITLFIMF). The Extracellular segment spans residues 769 to 794 (YVKNVSLMMNFQPPSKAWRASQMITF). Residues 795–815 (FIFLLFFPSFTGVLCTLAITI) traverse the membrane as a helical segment. Topologically, residues 816–859 (WRLKPSADCGPFRGLPSFIQSIYSWIDTLSHRPGYLWVVWIYQN) are cytoplasmic. A helical membrane pass occupies residues 860–880 (LIGSVHFFFILTLIVLIITYL). Topologically, residues 881–965 (YWQITEGRKV…RSMQEENAIA (85 aa)) are extracellular.

The protein belongs to the TMC family.

It is found in the membrane. Probable component of an ion channel. Molecular function hasn't been characterized yet. This Rattus norvegicus (Rat) protein is Transmembrane channel-like protein 5.